A 1323-amino-acid chain; its full sequence is Glutamate receptor ionotropic, NMDA 2D (1323 aa).

The N-terminal stretch at methionine 1–proline 27 is a signal peptide. Topologically, residues phenylalanine 28–serine 579 are extracellular. N-linked (GlcNAc...) asparagine glycosylation occurs at asparagine 89. An intrachain disulfide couples cysteine 101 to cysteine 345. N-linked (GlcNAc...) asparagine glycans are attached at residues asparagine 349, asparagine 363, asparagine 381, and asparagine 464. Intrachain disulfides connect cysteine 452–cysteine 480 and cysteine 459–cysteine 481. L-glutamate is bound by residues serine 536, threonine 538, and arginine 543. A glycan (N-linked (GlcNAc...) asparagine) is linked at asparagine 566. Residues proline 580–phenylalanine 601 form a helical membrane-spanning segment. Residues glutamate 602 to isoleucine 626 lie on the Cytoplasmic side of the membrane. The segment at residues glycine 627 to phenylalanine 638 is an intramembrane region (discontinuously helical). The pore-forming stretch occupies residues lysine 628–proline 647. The Cytoplasmic portion of the chain corresponds to asparagine 639–threonine 650. The helical transmembrane segment at threonine 651–threonine 671 threads the bilayer. Residues alanine 672–aspartate 840 are Extracellular-facing. An N-linked (GlcNAc...) asparagine glycan is attached at asparagine 712. L-glutamate contacts are provided by serine 714, threonine 715, and aspartate 756. Cysteine 770 and cysteine 825 are joined by a disulfide. The chain crosses the membrane as a helical span at residues asparagine 841–histidine 864. Topologically, residues leucine 865–valine 1323 are cytoplasmic. Disordered stretches follow at residues glutamate 897–alanine 952, alanine 977–glycine 1112, and proline 1201–valine 1323. The segment covering alanine 899–phenylalanine 929 has biased composition (pro residues). The segment covering proline 931–tryptophan 940 has biased composition (basic and acidic residues). Positions alanine 977–proline 986 are enriched in low complexity. Positions leucine 987–serine 1001 are enriched in pro residues. The segment covering alanine 1030–proline 1039 has biased composition (low complexity). The segment covering threonine 1080 to cysteine 1092 has biased composition (pro residues). A compositionally biased stretch (basic residues) spans proline 1208–histidine 1228. Residue arginine 1303 is modified to Omega-N-methylarginine. Serine 1313 is subject to Phosphoserine. The short motif at serine 1321–valine 1323 is the PDZ-binding element.

This sequence belongs to the glutamate-gated ion channel (TC 1.A.10.1) family. NR2D/GRIN2D subfamily. In terms of assembly, heterotetramer. Forms heterotetrameric channels composed of two GluN1/zeta subunits (GRIN1), and two identical GluN2/epsilon subunits (GRIN2A, GRIN2B, GRIN2C or GRIN2D) or GluN3 subunits (GRIN3A or GRIN3B) (in vitro). In vivo, the subunit composition may depend on the expression levels of the different subunits. Interacts with PDZ domains of PATJ and DLG4. In terms of tissue distribution, detected in neonate brain synaptosomes (at protein level).

The protein resides in the cell membrane. Its subcellular location is the postsynaptic cell membrane. The enzyme catalyses Ca(2+)(in) = Ca(2+)(out). The catalysed reaction is Na(+)(in) = Na(+)(out). It carries out the reaction K(+)(in) = K(+)(out). Functionally, component of N-methyl-D-aspartate (NMDA) receptors (NMDARs) that function as heterotetrameric, ligand-gated cation channels with high calcium permeability and voltage-dependent block by Mg(2+). Participates in synaptic plasticity for learning and memory formation. Channel activation requires binding of the neurotransmitter L-glutamate to the GluN2 subunit, glycine or D-serine binding to the GluN1 subunit, plus membrane depolarization to eliminate channel inhibition by Mg(2+). NMDARs mediate simultaneously the potasium efflux and the influx of calcium and sodium. Each GluN2 subunit confers differential attributes to channel properties, including activation, deactivation and desensitization kinetics, pH sensitivity, Ca2(+) permeability, and binding to allosteric modulators. In Mus musculus (Mouse), this protein is Glutamate receptor ionotropic, NMDA 2D.